Consider the following 183-residue polypeptide: Adenine phosphoribosyltransferase (183 aa).

The protein belongs to the purine/pyrimidine phosphoribosyltransferase family. As to quaternary structure, homodimer.

The protein localises to the cytoplasm. It carries out the reaction AMP + diphosphate = 5-phospho-alpha-D-ribose 1-diphosphate + adenine. It participates in purine metabolism; AMP biosynthesis via salvage pathway; AMP from adenine: step 1/1. Catalyzes a salvage reaction resulting in the formation of AMP, that is energically less costly than de novo synthesis. In Klebsiella pneumoniae subsp. pneumoniae (strain ATCC 700721 / MGH 78578), this protein is Adenine phosphoribosyltransferase.